Here is a 208-residue protein sequence, read N- to C-terminus: FMN-dependent NADH:quinone oxidoreductase (208 aa).

Residues 17-19, 99-102, and 143-146 contribute to the FMN site; these read SNS, MWNL, and SRGG.

It belongs to the azoreductase type 1 family. In terms of assembly, homodimer. The cofactor is FMN.

It carries out the reaction 2 a quinone + NADH + H(+) = 2 a 1,4-benzosemiquinone + NAD(+). The catalysed reaction is N,N-dimethyl-1,4-phenylenediamine + anthranilate + 2 NAD(+) = 2-(4-dimethylaminophenyl)diazenylbenzoate + 2 NADH + 2 H(+). Its function is as follows. Quinone reductase that provides resistance to thiol-specific stress caused by electrophilic quinones. Functionally, also exhibits azoreductase activity. Catalyzes the reductive cleavage of the azo bond in aromatic azo compounds to the corresponding amines. The protein is FMN-dependent NADH:quinone oxidoreductase of Staphylococcus haemolyticus (strain JCSC1435).